The following is a 310-amino-acid chain: 4-hydroxythreonine-4-phosphate dehydrogenase (310 aa).

The substrate site is built by His126 and Thr127. 3 residues coordinate a divalent metal cation: His156, His195, and His251. The substrate site is built by Lys259, Asn268, and Arg277.

The protein belongs to the PdxA family. Homodimer. It depends on Zn(2+) as a cofactor. Mg(2+) is required as a cofactor. Requires Co(2+) as cofactor.

It localises to the cytoplasm. It catalyses the reaction 4-(phosphooxy)-L-threonine + NAD(+) = 3-amino-2-oxopropyl phosphate + CO2 + NADH. It participates in cofactor biosynthesis; pyridoxine 5'-phosphate biosynthesis; pyridoxine 5'-phosphate from D-erythrose 4-phosphate: step 4/5. Catalyzes the NAD(P)-dependent oxidation of 4-(phosphooxy)-L-threonine (HTP) into 2-amino-3-oxo-4-(phosphooxy)butyric acid which spontaneously decarboxylates to form 3-amino-2-oxopropyl phosphate (AHAP). In Helicobacter acinonychis (strain Sheeba), this protein is 4-hydroxythreonine-4-phosphate dehydrogenase.